The sequence spans 129 residues: Small ribosomal subunit protein uS9 (129 aa).

Belongs to the universal ribosomal protein uS9 family.

This chain is Small ribosomal subunit protein uS9, found in Aliarcobacter butzleri (strain RM4018) (Arcobacter butzleri).